Consider the following 137-residue polypeptide: ATP synthase epsilon chain (137 aa).

It belongs to the ATPase epsilon chain family. F-type ATPases have 2 components, CF(1) - the catalytic core - and CF(0) - the membrane proton channel. CF(1) has five subunits: alpha(3), beta(3), gamma(1), delta(1), epsilon(1). CF(0) has three main subunits: a, b and c.

It is found in the cell membrane. Functionally, produces ATP from ADP in the presence of a proton gradient across the membrane. The polypeptide is ATP synthase epsilon chain (Caldicellulosiruptor saccharolyticus (strain ATCC 43494 / DSM 8903 / Tp8T 6331)).